The primary structure comprises 379 residues: Homoserine O-succinyltransferase (379 aa).

The AB hydrolase-1 domain maps to 51-360; it reads NAVLICHALS…DSPYGHDAFL (310 aa). Catalysis depends on Ser-157, which acts as the Nucleophile. Position 227 (Arg-227) interacts with substrate. Catalysis depends on residues Asp-323 and His-356. Asp-357 serves as a coordination point for substrate.

This sequence belongs to the AB hydrolase superfamily. MetX family. As to quaternary structure, homodimer.

Its subcellular location is the cytoplasm. The enzyme catalyses L-homoserine + succinyl-CoA = O-succinyl-L-homoserine + CoA. The protein operates within amino-acid biosynthesis; L-methionine biosynthesis via de novo pathway; O-succinyl-L-homoserine from L-homoserine: step 1/1. Functionally, transfers a succinyl group from succinyl-CoA to L-homoserine, forming succinyl-L-homoserine. The chain is Homoserine O-succinyltransferase from Pseudomonas entomophila (strain L48).